The following is a 681-amino-acid chain: Fibulin-1 (681 aa).

Residues 1–17 (MDLYMIVLLSLCGLLRA) form the signal peptide. Intrachain disulfides connect Cys-29–Cys-55, Cys-30–Cys-62, Cys-43–Cys-63, Cys-72–Cys-103, Cys-85–Cys-104, Cys-106–Cys-125, Cys-107–Cys-138, Cys-114–Cys-139, Cys-162–Cys-171, Cys-167–Cys-176, Cys-178–Cys-191, Cys-197–Cys-210, Cys-204–Cys-219, Cys-225–Cys-237, Cys-243–Cys-256, Cys-250–Cys-265, Cys-271–Cys-283, Cys-289–Cys-301, Cys-317–Cys-330, Cys-336–Cys-348, Cys-343–Cys-357, Cys-359–Cys-372, Cys-378–Cys-390, Cys-386–Cys-399, Cys-401–Cys-414, Cys-420–Cys-429, Cys-440–Cys-454, Cys-460–Cys-473, Cys-469–Cys-482, Cys-484–Cys-498, Cys-504–Cys-517, Cys-511–Cys-526, and Cys-531–Cys-553. 3 consecutive Anaphylatoxin-like domains span residues 29–63 (CCED…EQCC), 68–107 (EDSI…CECC), and 108–139 (LLGS…RSCC). The 35-residue stretch at 158-192 (TEDQCRAAGCAQRCLNGTCSCLDGFKLKTDGKHCE) folds into the EGF-like 1 domain. Residue Asn-173 is glycosylated (N-linked (GlcNAc...) asparagine). In terms of domain architecture, EGF-like 2; calcium-binding spans 193–238 (DINECLLGPHHCVTGERCINTLGSYRCQREISCGTGYELTDNNKCK). Positions 239-284 (DIDECDLGTHNCAAEMECQNTAGSFRCRPRMQCAAGFIQDALGSCI) constitute an EGF-like 3; calcium-binding domain. An EGF-like 4; calcium-binding domain is found at 285 to 331 (DINECVSVTALSRGQMCFNTVGSFICQRHSVTCGRGYHLNAEGTRCV). Residues 332 to 373 (DIDECAGPDNSCDGHGCINLVGSYRCECRTGFIFNSISRSCE) form the EGF-like 5; calcium-binding domain. The 42-residue stretch at 374–415 (DIDECRNYPGRLCAHKCENILGSYKCSCTAGFKLADDGRNCD) folds into the EGF-like 6; calcium-binding domain. Residues 416 to 455 (DVNECESSPCSQGCANVYGSYQSYCRRGYQLSDADGITCE) form the EGF-like 7; calcium-binding domain. Positions 456-499 (DIDECALPTGGHICSYRCHNTPGSFHCTCPASGYTLAANGRSCQ) constitute an EGF-like 8; calcium-binding domain. In terms of domain architecture, EGF-like 9; calcium-binding spans 500–554 (DIDECLTGTHSCSESESCFNIQGGFRCLSFDCPANYRRSGDTRPRVDRADIIRCV).

It belongs to the fibulin family. Homomultimerizes and interacts with various extracellular matrix components such as FN1, LAMA1, NID, AGC1 and CSPG2.

The protein resides in the secreted. Its subcellular location is the extracellular space. It is found in the extracellular matrix. Functionally, incorporated into fibronectin-containing matrix fibers. May play a role in cell adhesion and migration along protein fibers within the extracellular matrix (ECM). Could be important for certain developmental processes and contribute to the supramolecular organization of ECM architecture, in particular to those of basement membranes. The protein is Fibulin-1 (fbln1) of Danio rerio (Zebrafish).